Reading from the N-terminus, the 417-residue chain is S-inosyl-L-homocysteine hydrolase (417 aa).

Residues aspartate 124 and glutamate 149 each contribute to the substrate site. 150–152 (TTT) contacts NAD(+). Substrate-binding residues include lysine 179 and aspartate 183. Residues asparagine 184, 213 to 218 (GYGWCG), glutamate 236, asparagine 271, 292 to 294 (SGH), and asparagine 339 contribute to the NAD(+) site.

This sequence belongs to the adenosylhomocysteinase family. Requires NAD(+) as cofactor.

Its subcellular location is the cytoplasm. The enzyme catalyses S-inosyl-L-homocysteine + H2O = L-homocysteine + inosine. Its pathway is amino-acid biosynthesis; S-adenosyl-L-methionine biosynthesis. In terms of biological role, catalyzes the hydrolysis of S-inosyl-L-homocysteine (SIH) to L-homocysteine (Hcy) and inosine. Likely functions in a S-adenosyl-L-methionine (SAM) recycling pathway from S-adenosyl-L-homocysteine (SAH) produced from SAM-dependent methylation reactions. Can also catalyze the reverse reaction in vitro, i.e. the synthesis of SIH from Hcy and inosine. The chain is S-inosyl-L-homocysteine hydrolase from Methanothermobacter thermautotrophicus (strain ATCC 29096 / DSM 1053 / JCM 10044 / NBRC 100330 / Delta H) (Methanobacterium thermoautotrophicum).